A 136-amino-acid polypeptide reads, in one-letter code: Protein NrdI (136 aa).

Belongs to the NrdI family.

In terms of biological role, probably involved in ribonucleotide reductase function. In Erwinia tasmaniensis (strain DSM 17950 / CFBP 7177 / CIP 109463 / NCPPB 4357 / Et1/99), this protein is Protein NrdI.